The primary structure comprises 656 residues: Protein arginine N-methyltransferase 7 (656 aa).

2 SAM-dependent MTase PRMT-type domains span residues 12 to 338 and 343 to 656; these read EREW…FSIW and GKDS…QSGN.

This sequence belongs to the class I-like SAM-binding methyltransferase superfamily. Protein arginine N-methyltransferase family. PRMT7 subfamily.

Functionally, arginine methyltransferase that can both catalyze the formation of omega-N monomethylarginine (MMA) and symmetrical dimethylarginine (sDMA). The polypeptide is Protein arginine N-methyltransferase 7 (prmt-7) (Caenorhabditis briggsae).